The sequence spans 874 residues: Leucine--tRNA ligase (874 aa).

The short motif at 47-57 (PYPSGKLHMGH) is the 'HIGH' region element. A 'KMSKS' region motif is present at residues 636–640 (KMSKS). Lysine 639 provides a ligand contact to ATP.

This sequence belongs to the class-I aminoacyl-tRNA synthetase family.

Its subcellular location is the cytoplasm. The catalysed reaction is tRNA(Leu) + L-leucine + ATP = L-leucyl-tRNA(Leu) + AMP + diphosphate. In Acinetobacter baumannii (strain AB307-0294), this protein is Leucine--tRNA ligase.